The following is a 513-amino-acid chain: Cyclin-dependent kinase C-2 (513 aa).

The Protein kinase domain maps to 26–325 (FEKLEQIGEG…AKDALDAEYF (300 aa)). Residues 32–40 (IGEGTYGQV) and K55 each bind ATP. At Y37 the chain carries Phosphotyrosine. The active-site Proton acceptor is the D164. Position 198 is a phosphothreonine (T198). The disordered stretch occupies residues 337–513 (LPTYESSHEF…ARNQQYGWQP (177 aa)). A compositionally biased stretch (low complexity) spans 395-404 (AGPNHPMNNN). Residues 434-448 (SGNQTGGYNNQSRGG) are compositionally biased toward polar residues. Gly residues-rich tracts occupy residues 461 to 476 (APYG…GYGV) and 483 to 496 (QGGG…GSGR).

Belongs to the protein kinase superfamily. CMGC Ser/Thr protein kinase family. CDC2/CDKX subfamily. Interacts with CYCT1-3. As to expression, highly expressed in flowers. Expressed in seedlings, roots, rosettes and stems.

It carries out the reaction L-seryl-[protein] + ATP = O-phospho-L-seryl-[protein] + ADP + H(+). It catalyses the reaction L-threonyl-[protein] + ATP = O-phospho-L-threonyl-[protein] + ADP + H(+). The catalysed reaction is [DNA-directed RNA polymerase] + ATP = phospho-[DNA-directed RNA polymerase] + ADP + H(+). In Arabidopsis thaliana (Mouse-ear cress), this protein is Cyclin-dependent kinase C-2 (CDKC-2).